The primary structure comprises 459 residues: Phosphoenolpyruvate carboxylase (459 aa).

Belongs to the PEPCase type 2 family. As to quaternary structure, homotetramer. Mg(2+) serves as cofactor.

It catalyses the reaction oxaloacetate + phosphate = phosphoenolpyruvate + hydrogencarbonate. In terms of biological role, catalyzes the irreversible beta-carboxylation of phosphoenolpyruvate (PEP) to form oxaloacetate (OAA), a four-carbon dicarboxylic acid source for the tricarboxylic acid cycle. This chain is Phosphoenolpyruvate carboxylase, found in Pyrobaculum calidifontis (strain DSM 21063 / JCM 11548 / VA1).